Consider the following 336-residue polypeptide: Probable allantoicase (336 aa).

This sequence belongs to the allantoicase family.

The enzyme catalyses allantoate + H2O = (S)-ureidoglycolate + urea. The protein operates within nitrogen metabolism; (S)-allantoin degradation; (S)-ureidoglycolate from allantoate (aminidohydrolase route): step 1/1. In Acinetobacter baumannii (strain AYE), this protein is Probable allantoicase.